A 124-amino-acid chain; its full sequence is Ribonuclease P protein component (124 aa).

Belongs to the RnpA family. As to quaternary structure, consists of a catalytic RNA component (M1 or rnpB) and a protein subunit.

It catalyses the reaction Endonucleolytic cleavage of RNA, removing 5'-extranucleotides from tRNA precursor.. Functionally, RNaseP catalyzes the removal of the 5'-leader sequence from pre-tRNA to produce the mature 5'-terminus. It can also cleave other RNA substrates such as 4.5S RNA. The protein component plays an auxiliary but essential role in vivo by binding to the 5'-leader sequence and broadening the substrate specificity of the ribozyme. This chain is Ribonuclease P protein component, found in Mycolicibacterium gilvum (strain PYR-GCK) (Mycobacterium gilvum (strain PYR-GCK)).